A 153-amino-acid chain; its full sequence is uncharacterized protein (153 aa).

Disordered stretches follow at residues P24–L87 and G101–S153. Residues S27 to S37 are compositionally biased toward low complexity. Residues T143 to S153 show a composition bias toward basic and acidic residues.

This is an uncharacterized protein from Dryophytes versicolor (chameleon treefrog).